Consider the following 436-residue polypeptide: bZIP transcription factor RISBZ1 (436 aa).

The tract at residues 1 to 27 is required for transactivation activity; the sequence is MEHVFAVDEIPDPLWAPPPPVQPAAAA. The segment at 182-258 is disordered; the sequence is LSPGPNGGSG…SARRSRSRKA (77 aa). Acidic residues predominate over residues 215–225; it reads PSEDDDMEGDA. Positions 236–299 constitute a bZIP domain; the sequence is EDKVKKRKES…SAAAIDNRVL (64 aa). Residues 238–257 form a basic motif region; the sequence is KVKKRKESNRESARRSRSRK. A leucine-zipper region spans residues 264–278; it reads LEEQVSLLRVENSSL.

As to quaternary structure, homodimer. Forms heterodimers with RISBZ2/BZP33 and RISBZ3/BZP20. Interacts with DOF3/RPBF. In terms of tissue distribution, specifically expressed in seeds. Expressed in aleurone and subaleurone layers of maturing seeds, but not in the embryo tissues.

The protein resides in the nucleus. Transcriptional activator that binds to the DNA specific sequence 5'-TGAGTCA-3' found in seed storage protein gene promoters. Involved in the endosperm-specific regulation of storage protein genes. Can activate the expression of genes encoding for the seed storage proteins glutelin, prolamin, globulin and the allergen RAG1. Functions synergistically with DOF3/RPBF to positively regulate quantitatively many seed storage protein genes. Functions synergistically with DOF3/RPBF to positively regulate some metabolic enzymes, such as alanine aminotransferase and pyruvate phosphate dikinase, that are expressed in developing seeds. Functions synergistically with DOF3/RPBF to positively regulate genes that are key players in the development of aleurone layers. Functions synergistically with DOF3/RPBF to positively regulate the glutelin GLUD-1 gene in endosperm of developing seeds. Can activate the expression of the bifunctional lysine-degrading enzyme, lysine ketoglutarate reductase/saccharopine dehydrogenase (LKR/SDH), one of the key regulators determining free lysine content in plants. Functions as a key regulator of starch synthesis in seeds, by direct binding to the promoters of starch-synthesizing genes, such as AGPL3, WAXXY and SBE1. The polypeptide is bZIP transcription factor RISBZ1 (Oryza sativa subsp. japonica (Rice)).